A 510-amino-acid chain; its full sequence is Protein phosphatase 1H (510 aa).

Residues 73-503 form the PPM-type phosphatase domain; the sequence is STGYAEVINA…DDISVYVIPL (431 aa). 2 disordered regions span residues 105–128 and 188–225; these read VQST…EGLQ and LGEE…PTRF.

Belongs to the PP2C family.

It localises to the nucleus. It is found in the cytoplasm. It carries out the reaction O-phospho-L-seryl-[protein] + H2O = L-seryl-[protein] + phosphate. The enzyme catalyses O-phospho-L-threonyl-[protein] + H2O = L-threonyl-[protein] + phosphate. The polypeptide is Protein phosphatase 1H (ppm1h) (Xenopus tropicalis (Western clawed frog)).